The chain runs to 241 residues: Homeobox protein TGIF2LX (241 aa).

Disordered regions lie at residues 1–58 (MEAA…GNLP) and 126–210 (TGKD…SPEE). The segment covering 21 to 39 (AKTQSPAQDTSIMSRNNAD) has biased composition (polar residues). A DNA-binding region (homeobox; TALE-type) is located at residues 48 to 111 (EHKKKRKGNL…INARRRILPD (64 aa)). Positions 195–206 (VSVTSPSSPELV) are enriched in low complexity.

The protein belongs to the TALE/TGIF homeobox family. In terms of tissue distribution, specifically expressed in adult testis.

It is found in the nucleus. Its function is as follows. May have a transcription role in testis. This is Homeobox protein TGIF2LX (TGIF2LX) from Homo sapiens (Human).